Here is a 166-residue protein sequence, read N- to C-terminus: Chemoreceptor glutamine deamidase CheD (166 aa).

The protein belongs to the CheD family. As to quaternary structure, forms a complex with CheC.

The enzyme catalyses L-glutaminyl-[protein] + H2O = L-glutamyl-[protein] + NH4(+). Deamidates glutamine residues to glutamate on methyl-accepting chemotaxis receptors (MCPs). CheD-mediated MCP deamidation is required for productive communication of the conformational signals of the chemoreceptors to the CheA kinase. The polypeptide is Chemoreceptor glutamine deamidase CheD (Bacillus velezensis (strain DSM 23117 / BGSC 10A6 / LMG 26770 / FZB42) (Bacillus amyloliquefaciens subsp. plantarum)).